Consider the following 156-residue polypeptide: UPF0523 protein C (156 aa).

It belongs to the UPF0523 family.

The chain is UPF0523 protein C from Dictyostelium discoideum (Social amoeba).